The following is a 476-amino-acid chain: Casein kinase 1-like protein 7 (476 aa).

The region spanning 9-278 is the Protein kinase domain; sequence FKLGKKIGSG…LKRLFRDLFI (270 aa). Residues 15 to 23 and K38 contribute to the ATP site; that span reads IGSGSFGEL. The Proton acceptor role is filled by D128. Disordered regions lie at residues 299-324 and 340-464; these read GSSS…DPIE and PGAV…TRED. Residues 357 to 367 are compositionally biased toward basic and acidic residues; the sequence is PRDRSRSRNSD. The segment covering 382-422 has biased composition (low complexity); sequence ANSSSRYRASSSRKAVAASSSRPSSAGGPSESRTSSRLVSS. The segment covering 423–432 has biased composition (gly residues); it reads SGGGGSGSGN.

This sequence belongs to the protein kinase superfamily. CK1 Ser/Thr protein kinase family. Casein kinase I subfamily. Monomer. Autophosphorylated.

It is found in the cytoplasm. It catalyses the reaction L-seryl-[protein] + ATP = O-phospho-L-seryl-[protein] + ADP + H(+). It carries out the reaction L-threonyl-[protein] + ATP = O-phospho-L-threonyl-[protein] + ADP + H(+). Casein kinases are operationally defined by their preferential utilization of acidic proteins such as caseins as substrates. It can phosphorylate a large number of proteins. The protein is Casein kinase 1-like protein 7 of Arabidopsis thaliana (Mouse-ear cress).